The sequence spans 359 residues: Mandelate racemase (359 aa).

The active-site Proton acceptor; specific for S-mandelate is K166. Mg(2+) contacts are provided by D195, E221, and E247. Residue H297 is the Proton acceptor; specific for R-mandelate of the active site. Residue E317 coordinates substrate.

It belongs to the mandelate racemase/muconate lactonizing enzyme family. As to quaternary structure, homooctamer. Requires Mg(2+) as cofactor.

The catalysed reaction is (S)-mandelate = (R)-mandelate. Its pathway is aromatic compound metabolism; (R)-mandelate degradation; benzoate from (R)-mandelate: step 1/4. The chain is Mandelate racemase (mdlA) from Pseudomonas putida (Arthrobacter siderocapsulatus).